The chain runs to 370 residues: Actin-related protein 2/3 complex subunit 1A (370 aa).

WD repeat units lie at residues 6 to 45 (FLLEPITCHAWNRDRTQIALSPNNHEVHIYKKNGSQWTKA), 50 to 89 (EHNGHITGIDWAPKSDRIVTCGADRNAYVWSQKDGIWKPT), 140 to 179 (PIRSTVLSLDWHPNNVLLAAGSCDFKCRVFSAYIKEVDEK), 202 to 241 (GTGGWVHGVSFSASGNRLAWVSHDSTVSVADASKSVQVST), 244 to 284 (TEFL…TFVS), and 322 to 365 (LHQN…SSIQ).

The protein belongs to the WD repeat ARPC1 family. In terms of assembly, probable component of the Arp2/3 complex in which it may replace ARPC1B.

The protein localises to the cytoplasm. The protein resides in the cytoskeleton. Its subcellular location is the nucleus. Functionally, probably functions as a component of the Arp2/3 complex which is involved in regulation of actin polymerization and together with an activating nucleation-promoting factor (NPF) mediates the formation of branched actin networks. In addition to its role in the cytoplasmic cytoskeleton, the Arp2/3 complex also promotes actin polymerization in the nucleus, thereby regulating gene transcription and repair of damaged DNA. This Mus musculus (Mouse) protein is Actin-related protein 2/3 complex subunit 1A (Arpc1a).